Consider the following 352-residue polypeptide: UDP-3-O-acylglucosamine N-acyltransferase (352 aa).

The active-site Proton acceptor is the H242.

This sequence belongs to the transferase hexapeptide repeat family. LpxD subfamily. Homotrimer.

The enzyme catalyses a UDP-3-O-[(3R)-3-hydroxyacyl]-alpha-D-glucosamine + a (3R)-hydroxyacyl-[ACP] = a UDP-2-N,3-O-bis[(3R)-3-hydroxyacyl]-alpha-D-glucosamine + holo-[ACP] + H(+). Its pathway is bacterial outer membrane biogenesis; LPS lipid A biosynthesis. Its function is as follows. Catalyzes the N-acylation of UDP-3-O-acylglucosamine using 3-hydroxyacyl-ACP as the acyl donor. Is involved in the biosynthesis of lipid A, a phosphorylated glycolipid that anchors the lipopolysaccharide to the outer membrane of the cell. In Alkalilimnicola ehrlichii (strain ATCC BAA-1101 / DSM 17681 / MLHE-1), this protein is UDP-3-O-acylglucosamine N-acyltransferase.